The sequence spans 226 residues: MDAGKAGQTLKTHCSAQRPDVCRWLSPFILSCCVYFCLWIPEDQLSWFAALVKCLPVLCLAGFLWVMSPSGGYTQLLQGALVCSAVGDACLIWPAAFVPGMAAFATAHLLYVWAFGFSPLQPGLLLLIILAPGPYLSLVLQHLEPDMVLPVAAYGLILMAMLWRGLAQGGSAGWGALLFTLSDGVLAWDTFAQPLPHAHLVIMTTYYAAQLLITLSALRSPVPKTD.

Residues 1 to 23 (MDAGKAGQTLKTHCSAQRPDVCR) are Cytoplasmic-facing. The helical transmembrane segment at 24-40 (WLSPFILSCCVYFCLWI) threads the bilayer. The Extracellular segment spans residues 41-46 (PEDQLS). The helical transmembrane segment at 47–67 (WFAALVKCLPVLCLAGFLWVM) threads the bilayer. Residues 68 to 75 (SPSGGYTQ) are Cytoplasmic-facing. Residues 76–93 (LLQGALVCSAVGDACLIW) traverse the membrane as a helical segment. The Extracellular portion of the chain corresponds to 94–100 (PAAFVPG). The helical transmembrane segment at 101 to 117 (MAAFATAHLLYVWAFGF) threads the bilayer. Residues 118 to 123 (SPLQPG) are Cytoplasmic-facing. A helical membrane pass occupies residues 124-140 (LLLLIILAPGPYLSLVL). Residues 141 to 146 (QHLEPD) lie on the Extracellular side of the membrane. The chain crosses the membrane as a helical span at residues 147–163 (MVLPVAAYGLILMAMLW). The Cytoplasmic segment spans residues 164-171 (RGLAQGGS). A helical transmembrane segment spans residues 172–188 (AGWGALLFTLSDGVLAW). At 189–199 (DTFAQPLPHAH) the chain is on the extracellular side. The helical transmembrane segment at 200–218 (LVIMTTYYAAQLLITLSAL) threads the bilayer. Over 219 to 226 (RSPVPKTD) the chain is Cytoplasmic.

Belongs to the TMEM86 family. Homodimer.

It is found in the endoplasmic reticulum membrane. The protein resides in the cytoplasm. It carries out the reaction a 1-O-(1Z-alkenyl)-sn-glycero-3-phosphocholine + H2O = a 2,3-saturated aldehyde + sn-glycerol 3-phosphocholine. The catalysed reaction is a 1-O-(1Z-alkenyl)-sn-glycero-3-phosphoethanolamine + H2O = a 2,3-saturated aldehyde + sn-glycero-3-phosphoethanolamine. Competitively inhibited by lysophosphatidic acid. Functionally, catalyzes the hydrolysis of the vinyl ether bond of choline or ethanolamine lysoplasmalogens, forming fatty aldehyde and glycerophosphocholine or glycerophosphoethanolamine, respectively and is specific for the sn-2-deacylated (lyso) form of plasmalogen. The protein is Lysoplasmalogenase TMEM86B (TMEM86B) of Homo sapiens (Human).